The sequence spans 119 residues: Ribosome-binding factor A (119 aa).

The protein belongs to the RbfA family. As to quaternary structure, monomer. Binds 30S ribosomal subunits, but not 50S ribosomal subunits or 70S ribosomes.

The protein resides in the cytoplasm. One of several proteins that assist in the late maturation steps of the functional core of the 30S ribosomal subunit. Associates with free 30S ribosomal subunits (but not with 30S subunits that are part of 70S ribosomes or polysomes). Required for efficient processing of 16S rRNA. May interact with the 5'-terminal helix region of 16S rRNA. This is Ribosome-binding factor A from Buchnera aphidicola subsp. Baizongia pistaciae (strain Bp).